The sequence spans 421 residues: Exoskeleton protein RP43 (421 aa).

The signal sequence occupies residues 1–24; that stretch reads MRVIFVISLVSFMFVTWQTNPVHC. 6 disulfides stabilise this stretch: cysteine 72–cysteine 104, cysteine 132–cysteine 154, cysteine 193–cysteine 219, cysteine 247–cysteine 269, cysteine 309–cysteine 335, and cysteine 362–cysteine 384. CUB domains lie at 72–191, 193–306, and 309–421; these read CSKP…YSIV, CNSL…YSVP, and CSVV…YTTG.

As to expression, detected in vestimentum and trunk but not in opisthosome or obturaculum. In the vestimentum, expression is restricted to epithelial cells under apical cuticular plaques.

In terms of biological role, may play a role in protein-protein interactions during tube assembly. This is Exoskeleton protein RP43 from Riftia pachyptila (Vent tube worm).